The chain runs to 507 residues: ATP synthase subunit alpha, chloroplastic (507 aa).

170-177 provides a ligand contact to ATP; the sequence is GDRQTGKT.

It belongs to the ATPase alpha/beta chains family. F-type ATPases have 2 components, CF(1) - the catalytic core - and CF(0) - the membrane proton channel. CF(1) has five subunits: alpha(3), beta(3), gamma(1), delta(1), epsilon(1). CF(0) has four main subunits: a, b, b' and c.

It localises to the plastid. The protein localises to the chloroplast thylakoid membrane. It carries out the reaction ATP + H2O + 4 H(+)(in) = ADP + phosphate + 5 H(+)(out). Functionally, produces ATP from ADP in the presence of a proton gradient across the membrane. The alpha chain is a regulatory subunit. This is ATP synthase subunit alpha, chloroplastic from Gossypium hirsutum (Upland cotton).